The chain runs to 360 residues: Protein phosphatase 1 regulatory subunit 7 (360 aa).

The segment at 1 to 65 is disordered; it reads MAAERGAGQQ…DEDPEEGQEL (65 aa). Residue alanine 2 is modified to N-acetylalanine. Residues serine 12, serine 24, serine 27, serine 44, and serine 47 each carry the phosphoserine modification. Residues 17-34 are compositionally biased toward basic and acidic residues; the sequence is EVDRRVESEESGDEEGKK. A compositionally biased stretch (acidic residues) spans 53 to 63; the sequence is ERGDEDPEEGQ. LRR repeat units lie at residues 77-98, 99-120, 121-142, 143-164, 165-186, 187-208, 209-230, 231-252, 253-274, 275-296, and 297-318; these read DAEDVDLNHYRIGKIEGFEVLK, KVKTLCLRQNLIKCIENLEGLQ, SLRELDLYDNQIRRIENLDALT, ELEVLDISFNLLRNIEGIDKLT, RLKKLFLVNNKINKIENISSLH, QLQMLELGSNRIRAIENIDTLT, NLESLFLGKNKITKLQNLDALT, NLTVLSMQSNRLTKIEGLQSLV, NLRELYLSHNGIEVIEGLDNNN, KLTMLDIASNRIKKIENVSHLT, and ELQEFWMNDNLLDCWSDLDELK. The residue at position 322 (serine 322) is a Phosphoserine. An LRRCT domain is found at 331-360; it reads NPLQRDPQYRRKIMLALPSVRQIDATFVRF.

This sequence belongs to the SDS22 family. In terms of assembly, interacts with PPP1CA, PPP1CB and PPP1CC/PPP1G. Interacts with PPP1CC isoform 2 in motile caudal epididymal spermatozoa. Expressed in epididymal spermatozoa including the principal piece of the flagellum and the head-neck junction.

The protein resides in the nucleus. Its function is as follows. Regulatory subunit of protein phosphatase 1. Inactivates the PPP1CC isoform 2 during epididymal sperm maturation. This chain is Protein phosphatase 1 regulatory subunit 7 (PPP1R7), found in Bos taurus (Bovine).